We begin with the raw amino-acid sequence, 339 residues long: Uroporphyrinogen decarboxylase (339 aa).

Substrate contacts are provided by residues 23 to 27 (RQAGR), D72, Y147, T202, and H315.

It belongs to the uroporphyrinogen decarboxylase family. In terms of assembly, homodimer.

Its subcellular location is the cytoplasm. The catalysed reaction is uroporphyrinogen III + 4 H(+) = coproporphyrinogen III + 4 CO2. The protein operates within porphyrin-containing compound metabolism; protoporphyrin-IX biosynthesis; coproporphyrinogen-III from 5-aminolevulinate: step 4/4. Its function is as follows. Catalyzes the decarboxylation of four acetate groups of uroporphyrinogen-III to yield coproporphyrinogen-III. This chain is Uroporphyrinogen decarboxylase, found in Citrifermentans bemidjiense (strain ATCC BAA-1014 / DSM 16622 / JCM 12645 / Bem) (Geobacter bemidjiensis).